Here is a 228-residue protein sequence, read N- to C-terminus: Transcription factor zip-11 (228 aa).

Positions 166–202 (RKRQQNKVAAARYRDKQKAKWQDLLDQLEAEEDRNQR) are basic motif. The region spanning 166-224 (RKRQQNKVAAARYRDKQKAKWQDLLDQLEAEEDRNQRLKLQAGHLEKEVAEMRQAFLAK) is the bZIP domain. Positions 203-210 (LKLQAGHL) are leucine-zipper.

It belongs to the bZIP family. Interacts with CCAAT/enhancer-binding protein cebp-2.

Its subcellular location is the nucleus. Transcription factor. Involved in modulating innate immune response pathways, acting to promote resistance against infection by Gram-negative bacterium P.aeruginosa strain PA14. May act as part of a feedback regulatory loop with the pmk-1/p38 MAPK pathway. May also function in concert with CCAAT/enhancer-binding protein cebp-2 to mediate immune responses, independently of the pmk-1/p38 MAPK pathway. The sequence is that of Transcription factor zip-11 from Caenorhabditis elegans.